The following is an 82-amino-acid chain: UPF0154 protein SMU_1719c (82 aa).

Residues 4–24 traverse the membrane as a helical segment; that stretch reads FLWILLVIIALLAGLVGGTFI.

This sequence belongs to the UPF0154 family.

The protein resides in the membrane. This Streptococcus mutans serotype c (strain ATCC 700610 / UA159) protein is UPF0154 protein SMU_1719c.